A 521-amino-acid chain; its full sequence is Probable cytosol aminopeptidase (521 aa).

Residues lysine 268 and aspartate 273 each coordinate Mn(2+). Residue lysine 280 is part of the active site. Mn(2+) is bound by residues aspartate 291, aspartate 350, and glutamate 352. Arginine 354 is an active-site residue.

This sequence belongs to the peptidase M17 family. Mn(2+) serves as cofactor.

It localises to the cytoplasm. It carries out the reaction Release of an N-terminal amino acid, Xaa-|-Yaa-, in which Xaa is preferably Leu, but may be other amino acids including Pro although not Arg or Lys, and Yaa may be Pro. Amino acid amides and methyl esters are also readily hydrolyzed, but rates on arylamides are exceedingly low.. It catalyses the reaction Release of an N-terminal amino acid, preferentially leucine, but not glutamic or aspartic acids.. Its function is as follows. Presumably involved in the processing and regular turnover of intracellular proteins. Catalyzes the removal of unsubstituted N-terminal amino acids from various peptides. The protein is Probable cytosol aminopeptidase of Chromobacterium violaceum (strain ATCC 12472 / DSM 30191 / JCM 1249 / CCUG 213 / NBRC 12614 / NCIMB 9131 / NCTC 9757 / MK).